Reading from the N-terminus, the 302-residue chain is 4-hydroxy-tetrahydrodipicolinate synthase (302 aa).

A pyruvate-binding site is contributed by Thr-44. The active-site Proton donor/acceptor is the Tyr-132. The Schiff-base intermediate with substrate role is filled by Lys-160. Residue Val-202 coordinates pyruvate.

This sequence belongs to the DapA family. Homotetramer; dimer of dimers.

It localises to the cytoplasm. It carries out the reaction L-aspartate 4-semialdehyde + pyruvate = (2S,4S)-4-hydroxy-2,3,4,5-tetrahydrodipicolinate + H2O + H(+). The protein operates within amino-acid biosynthesis; L-lysine biosynthesis via DAP pathway; (S)-tetrahydrodipicolinate from L-aspartate: step 3/4. Catalyzes the condensation of (S)-aspartate-beta-semialdehyde [(S)-ASA] and pyruvate to 4-hydroxy-tetrahydrodipicolinate (HTPA). In Thermomicrobium roseum (strain ATCC 27502 / DSM 5159 / P-2), this protein is 4-hydroxy-tetrahydrodipicolinate synthase.